Here is a 518-residue protein sequence, read N- to C-terminus: GMP synthase [glutamine-hydrolyzing] (518 aa).

Positions 13–203 (KIIVLDFGSQ…ALNICGCKGD (191 aa)) constitute a Glutamine amidotransferase type-1 domain. Cysteine 90 acts as the Nucleophile in catalysis. Active-site residues include histidine 177 and glutamate 179. The 190-residue stretch at 204 to 393 (WTMENFSEVE…LGMPDAIVWR (190 aa)) folds into the GMPS ATP-PPase domain. 231 to 237 (SGGVDSS) lines the ATP pocket.

Homodimer.

The enzyme catalyses XMP + L-glutamine + ATP + H2O = GMP + L-glutamate + AMP + diphosphate + 2 H(+). Its pathway is purine metabolism; GMP biosynthesis; GMP from XMP (L-Gln route): step 1/1. In terms of biological role, catalyzes the synthesis of GMP from XMP. The polypeptide is GMP synthase [glutamine-hydrolyzing] (Listeria innocua serovar 6a (strain ATCC BAA-680 / CLIP 11262)).